The sequence spans 241 residues: Lactate utilization protein C (241 aa).

Belongs to the LutC/YkgG family.

Functionally, is involved in L-lactate degradation and allows cells to grow with lactate as the sole carbon source. This chain is Lactate utilization protein C, found in Bacillus velezensis (strain DSM 23117 / BGSC 10A6 / LMG 26770 / FZB42) (Bacillus amyloliquefaciens subsp. plantarum).